Consider the following 119-residue polypeptide: Large ribosomal subunit protein uL18 (119 aa).

It belongs to the universal ribosomal protein uL18 family. Part of the 50S ribosomal subunit; part of the 5S rRNA/L5/L18/L25 subcomplex. Contacts the 5S and 23S rRNAs.

Its function is as follows. This is one of the proteins that bind and probably mediate the attachment of the 5S RNA into the large ribosomal subunit, where it forms part of the central protuberance. The chain is Large ribosomal subunit protein uL18 from Anaeromyxobacter sp. (strain Fw109-5).